A 330-amino-acid chain; its full sequence is Glucan endo-1,3-beta-glucosidase GIII (330 aa).

The signal sequence occupies residues 1-25 (MARKGVDVAVALVLVALAAFPAVHS). Glu117 (proton donor) is an active-site residue. Glu255 (nucleophile) is an active-site residue.

Belongs to the glycosyl hydrolase 17 family.

The enzyme catalyses Hydrolysis of (1-&gt;3)-beta-D-glucosidic linkages in (1-&gt;3)-beta-D-glucans.. May provide a degree of protection against microbial invasion of germinated barley grain through its ability to degrade fungal cell wall polysaccharides. The chain is Glucan endo-1,3-beta-glucosidase GIII from Hordeum vulgare (Barley).